The following is a 247-amino-acid chain: Mannose-specific lectin CML-2 (247 aa).

The a carbohydrate site is built by Asp-87 and Gly-107. A glycan (N-linked (GlcNAc...) asparagine) is linked at Asn-119. 2 residues coordinate Mn(2+): Glu-129 and Asp-131. Residues Asp-131 and Phe-133 each contribute to the Ca(2+) site. 2 residues coordinate a carbohydrate: Ser-138 and Asn-139. Ca(2+) contacts are provided by Asn-139 and Asp-142. Asp-142 and His-147 together coordinate Mn(2+). A carbohydrate contacts are provided by Gly-221, Glu-222, and Gln-223.

Belongs to the leguminous lectin family. As to quaternary structure, homodimer; non-covalently linked. Post-translationally, glycosylated.

Mannose-specific lectin. Also binds alpha-methyl-D-mannoside, D-glucose, N-acetyl-D-glucosamine and sucrose but not D-galactose, D-arabinose, D-fructose, D-xylose, lactose or glycoproteins fetiun, PSM and ovalbumin. Shows agglutinating activity towards rabbit erythrocytes. This chain is Mannose-specific lectin CML-2, found in Centrolobium microchaete (Canarywood tree).